The sequence spans 85 residues: Neurotoxin BmKAEP2 (85 aa).

Positions 1 to 21 (MKLFLLLVISASMLIDGLVNA) are cleaved as a signal peptide. One can recognise an LCN-type CS-alpha/beta domain in the interval 22–82 (DGYIRGSNGC…TWKSESNTCG (61 aa)). Disulfide bonds link Cys31/Cys81, Cys35/Cys56, Cys42/Cys63, and Cys46/Cys65.

It belongs to the long (4 C-C) scorpion toxin superfamily. Sodium channel inhibitor family. Beta subfamily. As to expression, expressed by the venom gland.

Its subcellular location is the secreted. Depressant insect beta-toxins cause a transient contraction paralysis followed by a slow flaccid paralysis. They bind voltage-independently at site-4 of sodium channels (Nav) and shift the voltage of activation toward more negative potentials thereby affecting sodium channel activation and promoting spontaneous and repetitive firing. This toxin is active only on insects. Has potential anti-epilepsy effect. The chain is Neurotoxin BmKAEP2 from Olivierus martensii (Manchurian scorpion).